The chain runs to 601 residues: MAKEKIIGIDLGTTNSVVAILEDKTPRVLENPNGKRTTPSVVSFKNDDIIVGEVAKRQLETNINTIASIKRKMGTSETVKINDKEYKPEEISAMILSYLKDYAEKKIGSKIKKAVITVPAYFNNAQREATKTAGRIAGLSVERIINEPTAAALAFGLDKTDKEQKILVYDLGGGTFDVSVLELANGTFEVLSTSGDNFLGGDDWDNEIVKWLIGKIKLEHKYDVSKDKMAMARLKEEAEKAKINLSTTSTTSINLPFLAVTDSGPINVEVELKRSDFEKMTQHLVERTRKPVRDALKEAKLKSEDLHEVLLVGGSTRIPAVQEMLQHELNKKPNHSINPDEVVAIGAAIQGAVLSGDINDVLLLDVTPLTLGIETQGGIATPLIQRNTTIPTTKSQIFSTAADNQSEVTINVVQGERQMAADNKSLGQFNLGGIEKAPRGTPQIEVSFSIDVNGIIKVSATDKKTNKIQTITIENSTSLTEEEIKKMIDDAEKNKEADAKKKEKIDVTVRAETLINQLEKTIKDQGDKIDPKEKEQTEKEITNIKDLILQDKIDELKIKLDQIEEVAKAFAQKAASKETSKNEQNEDGSIDAEIKEEDPKA.

The residue at position 175 (T175) is a Phosphothreonine; by autocatalysis. The disordered stretch occupies residues 570–601 (FAQKAASKETSKNEQNEDGSIDAEIKEEDPKA). Positions 575-584 (ASKETSKNEQ) are enriched in basic and acidic residues. Over residues 585–601 (NEDGSIDAEIKEEDPKA) the composition is skewed to acidic residues.

This sequence belongs to the heat shock protein 70 family.

Functionally, acts as a chaperone. The sequence is that of Chaperone protein DnaK from Mycoplasma mobile (strain ATCC 43663 / 163K / NCTC 11711) (Mesomycoplasma mobile).